The primary structure comprises 481 residues: Exodeoxyribonuclease I (481 aa).

The Exonuclease domain occupies 12–193 (LFYDYETFGK…SSDVYATMNI (182 aa)). Residues D15, E17, and D186 each coordinate Mg(2+). Position 17 (E17) interacts with substrate. Residues 202–350 (PKLFNFFFKY…KLKKFLCSIA (149 aa)) form the ExoI SH3-like domain. The ExoI C-terminal domain maps to 356–471 (NGSNVDLKMY…ELFEYVKYTR (116 aa)).

In terms of assembly, monomer. Interacts with ssb (via C-terminus); this interaction stimulates the exonuclease activity by recruiting the enzyme to its substrate. Mg(2+) serves as cofactor.

The catalysed reaction is Exonucleolytic cleavage in the 3'- to 5'-direction to yield nucleoside 5'-phosphates.. In terms of biological role, degrades single-stranded DNA (ssDNA) in a highly processive manner. Also functions as a DNA deoxyribophosphodiesterase that releases deoxyribose-phosphate moieties following the cleavage of DNA at an apurinic/apyrimidinic (AP) site by either an AP endonuclease or AP lyase. The sequence is that of Exodeoxyribonuclease I (sbcB) from Buchnera aphidicola subsp. Baizongia pistaciae (strain Bp).